The chain runs to 119 residues: Holo-[acyl-carrier-protein] synthase (119 aa).

Residues Asp8 and Glu58 each contribute to the Mg(2+) site.

It belongs to the P-Pant transferase superfamily. AcpS family. The cofactor is Mg(2+).

The protein localises to the cytoplasm. The catalysed reaction is apo-[ACP] + CoA = holo-[ACP] + adenosine 3',5'-bisphosphate + H(+). Transfers the 4'-phosphopantetheine moiety from coenzyme A to a Ser of acyl-carrier-protein. This chain is Holo-[acyl-carrier-protein] synthase, found in Bacillus cytotoxicus (strain DSM 22905 / CIP 110041 / 391-98 / NVH 391-98).